A 74-amino-acid chain; its full sequence is uncharacterized protein (74 aa).

Residues 54–72 (LIIPRFLLLIYSVIQCLFL) traverse the membrane as a helical segment.

The protein localises to the membrane. This is an uncharacterized protein from Saccharomyces cerevisiae (strain ATCC 204508 / S288c) (Baker's yeast).